Consider the following 825-residue polypeptide: NT-3 growth factor receptor (825 aa).

The first 31 residues, 1-31 (MDVSLCPAKCSFWRIFLLGSVWLDYVGSVLA), serve as a signal peptide directing secretion. 2 disulfide bridges follow: cysteine 32–cysteine 38 and cysteine 36–cysteine 45. Topologically, residues 32-429 (CPANCVCSKT…TVTHKPEEDT (398 aa)) are extracellular. N-linked (GlcNAc...) asparagine glycosylation is found at asparagine 68, asparagine 72, and asparagine 79. 2 LRR repeats span residues 104–125 (GLQK…AFAK) and 128–149 (HLRY…LFQT). N-linked (GlcNAc...) asparagine glycans are attached at residues asparagine 133 and asparagine 163. Residues 160–209 (NFFNCSCDIRWMQLWQEQGEARLDSQSLYCISADGSQLPLFRMNISQCDL) form the LRRCT domain. Intrachain disulfides connect cysteine 164–cysteine 189 and cysteine 166–cysteine 207. Residues asparagine 203, asparagine 218, asparagine 232, asparagine 259, asparagine 267, asparagine 272, and asparagine 294 are each glycosylated (N-linked (GlcNAc...) asparagine). Ig-like C2-type domains follow at residues 210–300 (PEIS…VALT) and 309–382 (SLVE…IAKN). Cysteine 231 and cysteine 284 are oxidised to a cystine. Cysteines 320 and 362 form a disulfide. N-linked (GlcNAc...) asparagine glycosylation is found at asparagine 375 and asparagine 388. Residues 430–453 (FGVSIAVGLAAFACVLLVVLFIMI) form a helical membrane-spanning segment. The Cytoplasmic segment spans residues 454-825 (NKYGRRSKFG…ATPIYLDILG (372 aa)). Serine 493 carries the phosphoserine modification. The residue at position 516 (tyrosine 516) is a Phosphotyrosine. The 288-residue stretch at 538 to 825 (IVLKRELGEG…ATPIYLDILG (288 aa)) folds into the Protein kinase domain. ATP contacts are provided by residues 544–552 (LGEGAFGKV) and lysine 572. Aspartate 679 (proton acceptor) is an active-site residue. A phosphotyrosine; by autocatalysis mark is found at tyrosine 705, tyrosine 709, and tyrosine 710.

Belongs to the protein kinase superfamily. Tyr protein kinase family. Insulin receptor subfamily. Exists in a dynamic equilibrium between monomeric (low affinity) and dimeric (high affinity) structures. Binds SH2B2. Interacts with SQSTM1 and KIDINS220. Interacts with PTPRS. Interacts with MAPK8IP3/JIP3. Post-translationally, ligand-mediated auto-phosphorylation. Isoform 2 expression is restricted to specific areas in adult brain. Isoform 3 transcripts are readily detected early during embryogenesis and are expressed predominantly in adult brain and gonads.

It is found in the membrane. The catalysed reaction is L-tyrosyl-[protein] + ATP = O-phospho-L-tyrosyl-[protein] + ADP + H(+). Its function is as follows. Receptor tyrosine kinase involved in nervous system and probably heart development. Upon binding of its ligand NTF3/neurotrophin-3, NTRK3 autophosphorylates and activates different signaling pathways, including the phosphatidylinositol 3-kinase/AKT and the MAPK pathways, that control cell survival and differentiation. The polypeptide is NT-3 growth factor receptor (Ntrk3) (Mus musculus (Mouse)).